A 226-amino-acid chain; its full sequence is Cytidylate kinase (226 aa).

Position 12-20 (G12–T20) interacts with ATP.

It belongs to the cytidylate kinase family. Type 1 subfamily.

It is found in the cytoplasm. The enzyme catalyses CMP + ATP = CDP + ADP. The catalysed reaction is dCMP + ATP = dCDP + ADP. The protein is Cytidylate kinase of Xanthomonas campestris pv. campestris (strain B100).